An 863-amino-acid chain; its full sequence is Leucine--tRNA ligase (863 aa).

Positions 40 to 51 match the 'HIGH' region motif; sequence PYPSGAGLHVGH. A 'KMSKS' region motif is present at residues 635-639; it reads KMSKS. An ATP-binding site is contributed by Lys638.

This sequence belongs to the class-I aminoacyl-tRNA synthetase family.

The protein resides in the cytoplasm. It catalyses the reaction tRNA(Leu) + L-leucine + ATP = L-leucyl-tRNA(Leu) + AMP + diphosphate. The chain is Leucine--tRNA ligase from Leptospira interrogans serogroup Icterohaemorrhagiae serovar Lai (strain 56601).